The primary structure comprises 463 residues: Argininosuccinate lyase (463 aa).

This sequence belongs to the lyase 1 family. Argininosuccinate lyase subfamily.

The protein localises to the cytoplasm. The catalysed reaction is 2-(N(omega)-L-arginino)succinate = fumarate + L-arginine. Its pathway is amino-acid biosynthesis; L-arginine biosynthesis; L-arginine from L-ornithine and carbamoyl phosphate: step 3/3. This chain is Argininosuccinate lyase, found in Methylorubrum populi (strain ATCC BAA-705 / NCIMB 13946 / BJ001) (Methylobacterium populi).